The primary structure comprises 425 residues: Adenylosuccinate synthetase (425 aa).

GTP is bound by residues 12 to 18 (GDEGKGK) and 40 to 42 (GHT). Catalysis depends on Asp13, which acts as the Proton acceptor. Mg(2+) contacts are provided by Asp13 and Gly40. IMP-binding positions include 13–16 (DEGK), 38–41 (NAGH), Thr130, Arg144, Gln224, Thr239, and Arg301. His41 (proton donor) is an active-site residue. 297–303 (TVSNRRR) contributes to the substrate binding site. GTP-binding positions include Arg303, 329–331 (KLD), and 411–413 (STS).

It belongs to the adenylosuccinate synthetase family. As to quaternary structure, homodimer. Mg(2+) is required as a cofactor.

The protein localises to the cytoplasm. It catalyses the reaction IMP + L-aspartate + GTP = N(6)-(1,2-dicarboxyethyl)-AMP + GDP + phosphate + 2 H(+). It participates in purine metabolism; AMP biosynthesis via de novo pathway; AMP from IMP: step 1/2. Its function is as follows. Plays an important role in the de novo pathway of purine nucleotide biosynthesis. Catalyzes the first committed step in the biosynthesis of AMP from IMP. This chain is Adenylosuccinate synthetase, found in Wolbachia pipientis wMel.